The following is a 324-amino-acid chain: Serine racemase (324 aa).

S32, K51, and T52 together coordinate ATP. The active-site Proton acceptor is the K56. Position 56 is an N6-(pyridoxal phosphate)lysine (K56). Residue T78 participates in Ca(2+) binding. S81 serves as the catalytic Proton acceptor. A pyridoxal 5'-phosphate-binding site is contributed by N83. Q86 and Y118 together coordinate ATP. D175 is a binding site for Mg(2+). Pyridoxal 5'-phosphate-binding residues include G182, G183, G184, and G185. Residues E207, A211, and D213 each contribute to the Ca(2+) site. Residues E207, A211, and D213 each contribute to the Mg(2+) site. Mn(2+) contacts are provided by E207, A211, and D213. Residue K277 participates in ATP binding. S310 serves as a coordination point for pyridoxal 5'-phosphate. N313 is a binding site for ATP.

This sequence belongs to the serine/threonine dehydratase family. As to quaternary structure, homodimer. Mg(2+) serves as cofactor. Requires Mn(2+) as cofactor. Ca(2+) is required as a cofactor. The cofactor is pyridoxal 5'-phosphate.

It catalyses the reaction L-serine = D-serine. It carries out the reaction L-serine = pyruvate + NH4(+). The catalysed reaction is D-serine = pyruvate + NH4(+). Its function is as follows. Catalyzes the synthesis of D-serine from L-serine. Has dehydratase activity towards both L-serine and D-serine. This chain is Serine racemase (srr), found in Dictyostelium discoideum (Social amoeba).